We begin with the raw amino-acid sequence, 87 residues long: Small ribosomal subunit protein bS16 (87 aa).

Belongs to the bacterial ribosomal protein bS16 family.

This chain is Small ribosomal subunit protein bS16, found in Ehrlichia chaffeensis (strain ATCC CRL-10679 / Arkansas).